The primary structure comprises 118 residues: Small ribosomal subunit protein uS13 (118 aa).

Residues 93–118 (RSLPVRGQRSKTNARTRKGPRKPIKK) form a disordered region.

The protein belongs to the universal ribosomal protein uS13 family. Part of the 30S ribosomal subunit. Forms a loose heterodimer with protein S19. Forms two bridges to the 50S subunit in the 70S ribosome.

Its function is as follows. Located at the top of the head of the 30S subunit, it contacts several helices of the 16S rRNA. In the 70S ribosome it contacts the 23S rRNA (bridge B1a) and protein L5 of the 50S subunit (bridge B1b), connecting the 2 subunits; these bridges are implicated in subunit movement. Contacts the tRNAs in the A and P-sites. This chain is Small ribosomal subunit protein uS13, found in Teredinibacter turnerae (strain ATCC 39867 / T7901).